Consider the following 235-residue polypeptide: Elongation factor Tu (235 aa).

The 125-residue stretch at 1–125 folds into the tr-type G domain; that stretch reads KNMITGAAQM…EVDEYIPTPE (125 aa). Residue 47 to 50 coordinates GTP; the sequence is NKED.

The protein belongs to the TRAFAC class translation factor GTPase superfamily. Classic translation factor GTPase family. EF-Tu/EF-1A subfamily. As to quaternary structure, monomer.

The protein resides in the cytoplasm. It catalyses the reaction GTP + H2O = GDP + phosphate + H(+). In terms of biological role, GTP hydrolase that promotes the GTP-dependent binding of aminoacyl-tRNA to the A-site of ribosomes during protein biosynthesis. This is Elongation factor Tu (tufA) from Gloeothece membranacea (strain PCC 6501 / SAG 26.84).